We begin with the raw amino-acid sequence, 313 residues long: Ribosomal RNA small subunit methyltransferase H (313 aa).

Residues 35–37, aspartate 55, phenylalanine 79, aspartate 101, and glutamine 108 contribute to the S-adenosyl-L-methionine site; that span reads GGH.

The protein belongs to the methyltransferase superfamily. RsmH family.

It is found in the cytoplasm. It catalyses the reaction cytidine(1402) in 16S rRNA + S-adenosyl-L-methionine = N(4)-methylcytidine(1402) in 16S rRNA + S-adenosyl-L-homocysteine + H(+). Functionally, specifically methylates the N4 position of cytidine in position 1402 (C1402) of 16S rRNA. This is Ribosomal RNA small subunit methyltransferase H from Shigella flexneri serotype 5b (strain 8401).